Consider the following 187-residue polypeptide: Corticoliberin (187 aa).

A signal peptide spans 1–19 (MRLRLLVSAGMLLVALSSC). The propeptide occupies 20–144 (LPCRALLSRG…HQGALERERR (125 aa)). Disordered stretches follow at residues 75 to 94 (AARL…SRPS) and 114 to 146 (QRSL…RRSE). Residues 117 to 129 (LDSRAEPAERGAE) show a composition bias toward basic and acidic residues. The residue at position 185 (Ile-185) is an Isoleucine amide.

This sequence belongs to the sauvagine/corticotropin-releasing factor/urotensin I family. In terms of assembly, interacts (via C-terminus) with CRFR1 (via N-terminal extracellular domain). As to expression, expressed in parvocellular paraventricular nucleus of the hypothalamus and in medial accessory olivary nucleus.

It is found in the secreted. In terms of biological role, hormone regulating the release of corticotropin from pituitary gland. Induces NLRP6 in intestinal epithelial cells, hence may influence gut microbiota profile. The sequence is that of Corticoliberin (Crh) from Mus musculus (Mouse).